Here is a 1594-residue protein sequence, read N- to C-terminus: NAD-specific glutamate dehydrogenase (1594 aa).

The active site involves Lys816.

It belongs to the Glu/Leu/Phe/Val dehydrogenases family. Interacts with (unphosphorylated) GarA.

The catalysed reaction is L-glutamate + NAD(+) + H2O = 2-oxoglutarate + NH4(+) + NADH + H(+). With respect to regulation, activity is inhibited by unphosphorylated GarA. Stimulated by manganese and magnesium. In terms of biological role, catalyzes the reversible conversion of L-glutamate to 2-oxoglutarate. Highly specific for NAD. This is NAD-specific glutamate dehydrogenase (gdh) from Mycolicibacterium smegmatis (strain ATCC 700084 / mc(2)155) (Mycobacterium smegmatis).